A 352-amino-acid polypeptide reads, in one-letter code: MLSLQTIAKMAVATNTYSKCHYPILKVFGLWWKNNTLNGPIKICNHCNNIMVGEYPMCYNHGMSLDIALIRAVKERNISLVQLFTEWGGNIDYGALCANTPSMQRLCKSLGAKPPKGRMYMDALIHLSDTLNDNDLIRGYEIFDDNSVLDCVNLIRLKIMLTLKARIPLMEQLDQIALKQLLQRYWYAMAVQHNLTTAIHYFNNHIPNIKPFGLRCALYFNDPFKIHDACRTVNMDPNEMMNIACQQDLNFQSIYYCYLLGADINQAMLMSLKYGHLSNMWFCIDLGADAFKEAGVLAEKKNRRVLQHILGLNIFKRELIPPCKDPDPYQIQILLKNYILKNVSTVFTYYCQ.

The protein belongs to the asfivirus MGF 360 family.

Its function is as follows. Plays a role in virus cell tropism, and may be required for efficient virus replication in macrophages. In African swine fever virus (isolate Warthog/Namibia/Wart80/1980) (ASFV), this protein is Protein MGF 360-16R.